The sequence spans 154 residues: SsrA-binding protein (154 aa).

The segment at 131–154 is disordered; the sequence is DKRQDLKQKEAKRDIERAFKERQQ. The segment covering 132-154 has biased composition (basic and acidic residues); it reads KRQDLKQKEAKRDIERAFKERQQ.

Belongs to the SmpB family.

It localises to the cytoplasm. Required for rescue of stalled ribosomes mediated by trans-translation. Binds to transfer-messenger RNA (tmRNA), required for stable association of tmRNA with ribosomes. tmRNA and SmpB together mimic tRNA shape, replacing the anticodon stem-loop with SmpB. tmRNA is encoded by the ssrA gene; the 2 termini fold to resemble tRNA(Ala) and it encodes a 'tag peptide', a short internal open reading frame. During trans-translation Ala-aminoacylated tmRNA acts like a tRNA, entering the A-site of stalled ribosomes, displacing the stalled mRNA. The ribosome then switches to translate the ORF on the tmRNA; the nascent peptide is terminated with the 'tag peptide' encoded by the tmRNA and targeted for degradation. The ribosome is freed to recommence translation, which seems to be the essential function of trans-translation. This is SsrA-binding protein from Listeria innocua serovar 6a (strain ATCC BAA-680 / CLIP 11262).